The following is a 329-amino-acid chain: Peroxidase 73 (329 aa).

The N-terminal stretch at 1–25 (MARFSLVVVVTLSLAISMFPDTTTA) is a signal peptide. Cystine bridges form between C36-C119, C69-C74, C125-C325, and C204-C236. The active-site Proton acceptor is H67. Ca(2+)-binding residues include D68, V71, G73, D75, and S77. P167 contributes to the substrate binding site. Residue H197 coordinates heme b. T198 provides a ligand contact to Ca(2+). N215 carries N-linked (GlcNAc...) asparagine glycosylation. Ca(2+) contacts are provided by D249, T252, and D257.

The protein belongs to the peroxidase family. Classical plant (class III) peroxidase subfamily. Requires heme b as cofactor. The cofactor is Ca(2+). Expressed in the whole plant, with the highest expression in roots.

It is found in the secreted. The catalysed reaction is 2 a phenolic donor + H2O2 = 2 a phenolic radical donor + 2 H2O. Functionally, removal of H(2)O(2), oxidation of toxic reductants, biosynthesis and degradation of lignin, suberization, auxin catabolism, response to environmental stresses such as wounding, pathogen attack and oxidative stress. These functions might be dependent on each isozyme/isoform in each plant tissue. In Arabidopsis thaliana (Mouse-ear cress), this protein is Peroxidase 73 (PER73).